A 319-amino-acid chain; its full sequence is Probable NAD(P)H-dependent D-xylose reductase xyl1 (319 aa).

The active-site Proton donor is the Y50. H112 is a substrate binding site. Residues 166-167 (SN), 215-224 (SSFGPLSFLE), and 271-281 (KSNNPARLLQN) contribute to the NAD(+) site.

It belongs to the aldo/keto reductase family.

The catalysed reaction is xylitol + NAD(+) = D-xylose + NADH + H(+). The enzyme catalyses xylitol + NADP(+) = D-xylose + NADPH + H(+). Its pathway is carbohydrate metabolism; D-xylose degradation. In terms of biological role, catalyzes the initial reaction in the xylose utilization pathway by reducing D-xylose into xylitol. Xylose is a major component of hemicelluloses such as xylan. Most fungi utilize D-xylose via three enzymatic reactions, xylose reductase (XR), xylitol dehydrogenase (XDH), and xylulokinase, to form xylulose 5-phosphate, which enters pentose phosphate pathway. The polypeptide is Probable NAD(P)H-dependent D-xylose reductase xyl1 (xyl1) (Emericella nidulans (strain FGSC A4 / ATCC 38163 / CBS 112.46 / NRRL 194 / M139) (Aspergillus nidulans)).